The primary structure comprises 205 residues: Glycerol-3-phosphate acyltransferase (205 aa).

Topologically, residues 1–3 (MSA) are periplasmic. A helical transmembrane segment spans residues 4 to 24 (IAPGMILFAYLCGSISSAILV). The Cytoplasmic segment spans residues 25–52 (CRLCGLPDPRTSGSGNPGATNVLRMGGK). Residues 53–73 (GAALAVLIFDVLKGMLPVWGA) traverse the membrane as a helical segment. The Periplasmic segment spans residues 74-80 (YELGVSP). Residues 81–101 (FWLGLIAIAACLGHIWPIFFG) traverse the membrane as a helical segment. Residues 102–111 (FKGGKGVATA) are Cytoplasmic-facing. A helical membrane pass occupies residues 112–132 (FGAIAPIGWDLTGVMAGTWLL). The Periplasmic portion of the chain corresponds to 133-137 (TVLLS). Residues 138 to 158 (GYSSLGAIVSALIAPFYVWWF) form a helical membrane-spanning segment. Residues 159-205 (KPQFTFPVSMLSCLILLRHHDNIQRLWRRQETKIWTKLKRKREKDPE) lie on the Cytoplasmic side of the membrane.

It belongs to the PlsY family. In terms of assembly, probably interacts with PlsX.

The protein resides in the cell inner membrane. It carries out the reaction sn-glycerol 3-phosphate + an acyl-CoA = a 1-acyl-sn-glycero-3-phosphate + CoA. The enzyme catalyses a fatty acyl-[ACP] + sn-glycerol 3-phosphate = a 1-acyl-sn-glycero-3-phosphate + holo-[ACP]. The protein operates within lipid metabolism; phospholipid metabolism. In terms of biological role, catalyzes the transfer of an acyl group from acyl-ACP to glycerol-3-phosphate (G3P) to form lysophosphatidic acid (LPA). This enzyme can also utilize acyl-CoA as fatty acyl donor, but not acyl-PO(4). The protein is Glycerol-3-phosphate acyltransferase of Escherichia fergusonii (strain ATCC 35469 / DSM 13698 / CCUG 18766 / IAM 14443 / JCM 21226 / LMG 7866 / NBRC 102419 / NCTC 12128 / CDC 0568-73).